Reading from the N-terminus, the 646-residue chain is Microtubule-associated protein 9 (646 aa).

Position 2 is an N-acetylserine (serine 2). At tyrosine 12 the chain carries Phosphotyrosine. Disordered stretches follow at residues 75-226 (DFHI…QTEE), 242-418 (SLTS…LEPD), 491-511 (RLEE…KGEA), 531-554 (RREK…KKKD), 570-597 (LKQK…KDKQ), and 609-646 (KERQ…SKVF). Polar residues-rich tracts occupy residues 105-119 (ALDS…SSPD) and 157-167 (RSTSSGETSSG). Basic and acidic residues predominate over residues 188-204 (SHTEEGVRPGVDKEHSI). 3 stretches are compositionally biased toward polar residues: residues 205–222 (SEAS…GTEL), 280–291 (LLSNENEGSSVL), and 330–340 (PLLSTSPSVIT). Residues 346 to 357 (EPAKKANEDRNT) show a composition bias toward basic and acidic residues. The span at 386–398 (TKRSPSAATSSHY) shows a compositional bias: polar residues. Positions 405–418 (LDQKQPRKQSLEPD) are enriched in basic and acidic residues. Positions 442–596 (MHRIKRIESE…KRAEKKDKDK (155 aa)) form a coiled coil. Over residues 637 to 646 (PSRTAPSKVF) the composition is skewed to polar residues.

Binds to purified microtubules via its C-terminus.

It localises to the cytoplasm. The protein localises to the cytoskeleton. The protein resides in the spindle. Functionally, involved in organization of the bipolar mitotic spindle. Required for bipolar spindle assembly, mitosis progression and cytokinesis. May act by stabilizing interphase microtubules. The chain is Microtubule-associated protein 9 (Map9) from Mus musculus (Mouse).